Here is a 295-residue protein sequence, read N- to C-terminus: MTEGVLPGLYLGNFIDAKDLDQLGRNKITHIISIHESPQPLLQDITYLRIPVADTPEVPIKKHFKECINFIHCCRLNGGNCLVHCFAGISRSTTIVTAYVMTVTGLGWRDVLEAIKATRPIANPNPGFRQQLEEFGWASSQKGARHRTSKTSGAQCPPMTSATCLLAARVALLSAALVREATGRTAQRCRLSPRAAAERLLGPPPHVAAGWSPDPKYQICLCFGEEDPGPTQHPKEQLIMADVQVQLRPGSSSCTLSASTERPDGSSTPGNPDGITHLQCSCLHPKRAASSSCTR.

In terms of domain architecture, Tyrosine-protein phosphatase spans 1 to 141 (MTEGVLPGLY…LEEFGWASSQ (141 aa)). T2 carries the N-myristoyl glycine lipid modification. Catalysis depends on C85, which acts as the Phosphocysteine intermediate. Residues 251–270 (SSSCTLSASTERPDGSSTPG) show a composition bias toward polar residues. The segment at 251–272 (SSSCTLSASTERPDGSSTPGNP) is disordered.

The protein belongs to the protein-tyrosine phosphatase family. Non-receptor class dual specificity subfamily. Highly expressed in testis. Expressed in brain; up-regulated in patients with multiple sclerosis gray matter lesions.

The protein localises to the cytoplasm. The protein resides in the cell membrane. The enzyme catalyses O-phospho-L-tyrosyl-[protein] + H2O = L-tyrosyl-[protein] + phosphate. The catalysed reaction is O-phospho-L-seryl-[protein] + H2O = L-seryl-[protein] + phosphate. It carries out the reaction O-phospho-L-threonyl-[protein] + H2O = L-threonyl-[protein] + phosphate. Functionally, may dephosphorylate MAPK13, ATF2, ERBB3, PDGFRB and SNX6. In terms of biological role, may play a role in the regulation of oligodendrocyte differentiation. May play a role in the regulation of myelin formation. Involved in the regulation of Erk1/2 phosphorylation in Schwann cells; the signaling may be linked to the regulation of myelination. The protein is Dual specificity protein phosphatase 15 of Homo sapiens (Human).